A 733-amino-acid polypeptide reads, in one-letter code: E3 ubiquitin-protein ligase COP1 (733 aa).

Residues 1–43 are disordered; it reads MSGSRQAGSGSAGTSPGSSAASSVTSASSSLSSSPSPPSVAAS. The Nuclear localization signal 1 motif lies at 111 to 115; sequence SSRKR. The RING-type zinc finger occupies 138–176; sequence CPICFDMIEEAYMTKCGHSFCYKCIHQSLEDNNRCPKCN. The short motif at 197-208 is the Nuclear localization signal 2 element; the sequence is KQKQRFEEKRFK. Residues 231-306 are a coiled coil; sequence DQDNLDLANV…RVEEMSGLYS (76 aa). A Nuclear export signal motif is present at residues 237 to 247; sequence LANVNLMLELL. The tract at residues 307–327 is disordered; the sequence is PVSEDSTVPQFEAPSPSHSSI. 7 WD repeats span residues 421-460, 470-510, 513-553, 555-595, 599-637, 640-679, and 695-731; these read NGSS…QDAV, TCNS…RSKV, EHEK…SVAS, EAKA…QPIM, GHRK…CLRS, GHIN…TLLT, and EDDT…KVLE. Positions 645–647 are interaction with TRIB1; it reads KNF.

It belongs to the COP1 family. As to quaternary structure, homodimer. Homodimerization is mediated by the coiled coil domain. Component of the DCX DET1-COP1 ubiquitin ligase complex at least composed of RBX1, DET1, DDB1, CUL4A and COP1. Isoform 2 does not interact with CUL4A but still binds to RBX1, suggesting that the interaction may be mediated by another cullin protein. Isoform 1 and isoform 2 interact with CUL5 but not with CUL1, CUL2 not CUL3. Interacts with bZIP transcription factors JUN, JUNB and JUND but not with FOS, ATF2 nor XBP1. Interacts with p53 (TP53). Interacts with COPS6; this interaction stabilizes RFWD2 through reducing its auto-ubiquitination and decelerating its turnover rate. Interacts with SFN; this interaction leads to SFN degradation. Interacts with p53/TP53 and MTA1. Interacts with TRIB1 (via C-terminus) and TRIB2.

It localises to the nucleus speckle. It is found in the cytoplasm. It carries out the reaction S-ubiquitinyl-[E2 ubiquitin-conjugating enzyme]-L-cysteine + [acceptor protein]-L-lysine = [E2 ubiquitin-conjugating enzyme]-L-cysteine + N(6)-ubiquitinyl-[acceptor protein]-L-lysine.. It participates in protein modification; protein ubiquitination. With respect to regulation, TRIB1 competes with substrates for RFWD2 binding. E3 ubiquitin-protein ligase that mediates ubiquitination and subsequent proteasomal degradation of target proteins. E3 ubiquitin ligases accept ubiquitin from an E2 ubiquitin-conjugating enzyme in the form of a thioester and then directly transfers the ubiquitin to targeted substrates. Involved in JUN ubiquitination and degradation. Directly involved in p53 (TP53) ubiquitination and degradation, thereby abolishing p53-dependent transcription and apoptosis. Ubiquitinates p53 independently of MDM2 or RCHY1. Probably mediates E3 ubiquitin ligase activity by functioning as the essential RING domain subunit of larger E3 complexes. In contrast, it does not constitute the catalytic RING subunit in the DCX DET1-COP1 complex that negatively regulates JUN, the ubiquitin ligase activity being mediated by RBX1. Involved in 14-3-3 protein sigma/SFN ubiquitination and proteasomal degradation, leading to AKT activation and promotion of cell survival. Ubiquitinates MTA1 leading to its proteasomal degradation. Upon binding to TRIB1, ubiquitinates CEBPA, which lacks a canonical COP1-binding motif. The polypeptide is E3 ubiquitin-protein ligase COP1 (Mus musculus (Mouse)).